A 1079-amino-acid polypeptide reads, in one-letter code: Electrogenic sodium bicarbonate cotransporter 1 (1079 aa).

The segment at 1–62 (MEDEAVLDRG…EKKEKERISE (62 aa)) is required for interaction with AHCYL1. The Cytoplasmic portion of the chain corresponds to 1–466 (MEDEAVLDRG…FASDFYDALN (466 aa)). E21 is subject to Phosphoserine. Y30 bears the Phosphotyrosine mark. Residues 39 to 52 (YRRRRRHKRKAGHK) are compositionally biased toward basic residues. The tract at residues 39 to 78 (YRRRRRHKRKAGHKEKKEKERISENYSDKSDVENADESSS) is disordered. Over residues 53 to 70 (EKKEKERISENYSDKSDV) the composition is skewed to basic and acidic residues. Phosphoserine is present on residues S61, S65, S68, S223, S232, S233, and S245. The interval 235–266 (SRMFSNPDNGSPAMTHRNLTSSSLNDISDKPE) is disordered. Phosphothreonine occurs at positions 249 and 254. A compositionally biased stretch (polar residues) spans 251-260 (RNLTSSSLND). 3 positions are modified to phosphoserine: S256, S257, and S262. Residues 467-491 (IQALSAILFIYLATVTNAITFGGLL) traverse the membrane as a helical segment. Residues 492-501 (GDATDNMQGV) are Extracellular-facing. A helical membrane pass occupies residues 502-520 (LESFLGTAVSGAIFCLFAG). Q521 is a topological domain (cytoplasmic). The chain crosses the membrane as a discontinuously helical span at residues 522 to 542 (PLTILSSTGPVLVFERLLFNF). Over 543 to 550 (SKDHNFDY) the chain is Extracellular. A helical transmembrane segment spans residues 551 to 571 (LEFRLWIGLWSAFMCLVLVAT). Residues 572–585 (DASFLVQYFTRFTE) are Cytoplasmic-facing. A helical transmembrane segment spans residues 586–609 (EGFSSLISFIFIYDAFKKMIKLAD). At 610 to 692 (YYPINSDFKV…GNNCDFVPDI (83 aa)) the chain is on the extracellular side. The chain crosses the membrane as a helical span at residues 693–710 (TLMSFILFLGTYTSSMAM). The Cytoplasmic segment spans residues 711 to 725 (KKFKTSRYFPTTARK). A helical membrane pass occupies residues 726–745 (LISDFAIILSILIFCVIDAL). At 746-779 (VGVDTPKLIVPSEFKPTSPNRGWFVPPFGGNPWW) the chain is on the extracellular side. An interaction with CA4 region spans residues 748-779 (VDTPKLIVPSEFKPTSPNRGWFVPPFGGNPWW). A helical transmembrane segment spans residues 780–807 (VCLAAAIPALLVTILIFMDQQITAVIVN). At 808–819 (RKEHKLKKGAGY) the chain is on the cytoplasmic side. The helical transmembrane segment at 820-836 (HLDLFWVAILMVVCSFM) threads the bilayer. Residue A837 is a topological domain, extracellular. A discontinuously helical transmembrane segment spans residues 838 to 855 (LPWYVAATVISIAHIDSL). Topologically, residues 856-877 (KMETETSAPGEQPKFLGVREQR) are cytoplasmic. Residues 878 to 894 (VTGTLVFILTGLSVFMA) traverse the membrane as a helical segment. Residues 895–901 (PILKFIP) are Extracellular-facing. Residues 902–918 (MPVLYGVFLYMGVASLN) form a helical membrane-spanning segment. Over 919-960 (GVQFMDRLKLLLMPLKHQPDFIYLRHVPLRRVHLFTFLQVLC) the chain is Cytoplasmic. The segment at residues 961-986 (LALLWILKSTVAAIIFPVMILALVAV) is an intramembrane region (discontinuously helical). Topologically, residues 987–1079 (RKGMDYLFSQ…STFLERHTSC (93 aa)) are cytoplasmic. The CA2-binding stretch occupies residues 1002–1004 (LDD). A disordered region spans residues 1012 to 1079 (KKKEDEKKKK…STFLERHTSC (68 aa)). A phosphoserine mark is found at S1026 and S1029. Residues 1030-1033 (DNDD) form a CA2-binding region. 2 positions are modified to phosphoserine: S1034 and S1044. The segment at 1057 to 1059 (FLS) is required for basolateral targeting. A compositionally biased stretch (basic and acidic residues) spans 1062–1079 (KPLDRERSSTFLERHTSC). S1069 carries the post-translational modification Phosphoserine.

The protein belongs to the anion exchanger (TC 2.A.31) family. In terms of assembly, homodimer. Interacts with CA2/carbonic anhydrase 2 and CA4/carbonic anhydrase 4 which may regulate transporter activity. Isoform 1 but not isoform 2 interacts with AHCYL1 (via PEST domain when phosphorylated); the interaction increases SLC4A4 isoform 1 activity. Interacts with AHCYL2. Phosphorylation of Ser-1026 by PKA increases the binding of CA2 and changes the Na(+):HCO3(-) stoichiometry of the transporter from 3:1 to 2:1. Phosphorylated in presence of STK39 and dephosphorylated in presence of PP1 phosphatase; phosphorylation seems to inhibit SLC4A4 activity. In terms of processing, N-glycosylated. May not be necessary for the transporter basic functions. As to expression, isoform 1 is specifically expressed in pancreatic ducts and acini. Also expressed in parotid acinar cells and in the colonic crypts.

The protein localises to the basolateral cell membrane. It is found in the cell membrane. It carries out the reaction 2 hydrogencarbonate(out) + Na(+)(out) = 2 hydrogencarbonate(in) + Na(+)(in). The enzyme catalyses 3 hydrogencarbonate(out) + Na(+)(out) = 3 hydrogencarbonate(in) + Na(+)(in). Activated by cyclic AMP. Functionally, electrogenic sodium/bicarbonate cotransporter with a Na(+):HCO3(-) stoichiometry varying from 1:2 to 1:3. May regulate bicarbonate influx/efflux at the basolateral membrane of cells and regulate intracellular pH. The polypeptide is Electrogenic sodium bicarbonate cotransporter 1 (Slc4a4) (Mus musculus (Mouse)).